The primary structure comprises 604 residues: Cell division cycle protein CDT1 (604 aa).

This sequence belongs to the Cdt1 family. As to quaternary structure, associates with the MCM2-7 complex. Interacts with MCM2, ORC1, ORC2 and ORC6.

Its subcellular location is the cytoplasm. The protein resides in the nucleus. Its function is as follows. DNA replication licensing factor, required for pre-replication complex assembly. Faithful duplication of the genetic material requires 'once per cell cycle' DNA replication initiation and elongation. Central to this control is the tightly regulated formation of prereplicative complexes (preRCs) at future origins of DNA replication. Required for the recruitment of the MCM2-7 helicase complex to the replication origins. This is Cell division cycle protein CDT1 (TAH11) from Saccharomyces cerevisiae (strain ATCC 204508 / S288c) (Baker's yeast).